A 242-amino-acid chain; its full sequence is uncharacterized protein (242 aa).

The 61-residue stretch at 2–62 (EKAYKILSVQ…VEKPSVIFED (61 aa)) folds into the S4 RNA-binding domain. Residue D93 is part of the active site.

Belongs to the pseudouridine synthase RluA family.

The catalysed reaction is a uridine in RNA = a pseudouridine in RNA. This is an uncharacterized protein from Helicobacter pylori (strain ATCC 700392 / 26695) (Campylobacter pylori).